A 359-amino-acid polypeptide reads, in one-letter code: CMP-N-acetylneuraminate-poly-alpha-2,8-sialyltransferase (359 aa).

The Cytoplasmic segment spans residues 1 to 7 (MRSIRKR). A helical; Signal-anchor for type II membrane protein transmembrane segment spans residues 8–20 (WTICTISLLLIFY). The Lumenal portion of the chain corresponds to 21–359 (KTKEMARTEE…KLTTGKCIKQ (339 aa)). Residues N50, N74, and N119 are each glycosylated (N-linked (GlcNAc...) asparagine). Intrachain disulfides connect C142-C292 and C156-C356. 2 residues coordinate CMP-N-acetyl-beta-neuraminate: N147 and N170. Residues N204 and N219 are each glycosylated (N-linked (GlcNAc...) asparagine). Positions 279, 280, 281, and 301 each coordinate CMP-N-acetyl-beta-neuraminate. H331 (proton donor/acceptor) is an active-site residue.

Belongs to the glycosyltransferase 29 family. Post-translationally, autopolysialylated.

It is found in the golgi apparatus membrane. Its subcellular location is the secreted. It carries out the reaction [N-acetyl-alpha-D-neuraminosyl-(2-&gt;8)](n) + CMP-N-acetyl-beta-neuraminate = [N-acetyl-alpha-D-neuraminosyl-(2-&gt;8)](n+1) + CMP + H(+). Functionally, catalyzes the transfer of a sialic acid from a CMP-linked sialic acid donor onto a terminal alpha-2,3-, alpha-2,6-, or alpha-2,8-linked sialic acid of an N-linked glycan protein acceptor through alpha-2,8-linkages. Therefore, participates in polysialic acid synthesis on various sialylated N-acetyllactosaminyl oligosaccharides, including NCAM1 N-glycans, FETUB N-glycans and AHSG. It is noteworthy that alpha-2,3-linked sialic acid is apparently a better acceptor than alpha-2,6-linked sialic acid. In Bos taurus (Bovine), this protein is CMP-N-acetylneuraminate-poly-alpha-2,8-sialyltransferase (ST8SIA4).